A 384-amino-acid polypeptide reads, in one-letter code: MKFIDEAKIEVAAGKGGNGATSFRREKFVPRGGPDGGDGGKGGSVWAEADENTNTLVEYRFVKRYQAKNGEKGHGSDRYGAGADDIVLKMPVGTLIRDLDTDEIVADLTYHGQRVCLAKGGKGGLGHIHFKSSVNRAPKQSTPGEEGETRSLQLELKVLADVGLLGMPNAGKSTLITAVSAARPKIANYPFTTLHPNLGVVRIDENHSFVMADIPGLIEGAAEGAGLGHRFLKHLSRTGLLLHVVDLAPFDEAVDPAEEALAIINELRKYDEELYGKPRWLVLNKLDMLDEEEAQERTVTFLEAVGWDYPKPDDRFQFDMETPRLFQISALTHQGTQELVHQINQYLTEKKRLEAEKAEAEKAAANVEIIEQQPKTDTGVFKPE.

The Obg domain occupies 1–159 (MKFIDEAKIE…RSLQLELKVL (159 aa)). A disordered region spans residues 20–46 (ATSFRREKFVPRGGPDGGDGGKGGSVW). The segment covering 33 to 43 (GPDGGDGGKGG) has biased composition (gly residues). Residues 160-348 (ADVGLLGMPN…LVHQINQYLT (189 aa)) form the OBG-type G domain. GTP contacts are provided by residues 166–173 (GMPNAGKS), 191–195 (FTTLH), 213–216 (DIPG), 284–287 (NKLD), and 329–331 (SAL). The Mg(2+) site is built by S173 and T193.

The protein belongs to the TRAFAC class OBG-HflX-like GTPase superfamily. OBG GTPase family. As to quaternary structure, monomer. The cofactor is Mg(2+).

Its subcellular location is the cytoplasm. Its function is as follows. An essential GTPase which binds GTP, GDP and possibly (p)ppGpp with moderate affinity, with high nucleotide exchange rates and a fairly low GTP hydrolysis rate. Plays a role in control of the cell cycle, stress response, ribosome biogenesis and in those bacteria that undergo differentiation, in morphogenesis control. The polypeptide is GTPase Obg (Neisseria meningitidis serogroup C (strain 053442)).